A 447-amino-acid polypeptide reads, in one-letter code: Probable glycine dehydrogenase (decarboxylating) subunit 1 (447 aa).

The protein belongs to the GcvP family. N-terminal subunit subfamily. The glycine cleavage system is composed of four proteins: P, T, L and H. In this organism, the P 'protein' is a heterodimer of two subunits.

It carries out the reaction N(6)-[(R)-lipoyl]-L-lysyl-[glycine-cleavage complex H protein] + glycine + H(+) = N(6)-[(R)-S(8)-aminomethyldihydrolipoyl]-L-lysyl-[glycine-cleavage complex H protein] + CO2. In terms of biological role, the glycine cleavage system catalyzes the degradation of glycine. The P protein binds the alpha-amino group of glycine through its pyridoxal phosphate cofactor; CO(2) is released and the remaining methylamine moiety is then transferred to the lipoamide cofactor of the H protein. In Bacillus mycoides (strain KBAB4) (Bacillus weihenstephanensis), this protein is Probable glycine dehydrogenase (decarboxylating) subunit 1.